The following is a 205-amino-acid chain: Holliday junction resolvase RecU (205 aa).

The Mg(2+) site is built by T83, D85, E98, and Q117.

This sequence belongs to the RecU family. Mg(2+) is required as a cofactor.

The protein resides in the cytoplasm. It carries out the reaction Endonucleolytic cleavage at a junction such as a reciprocal single-stranded crossover between two homologous DNA duplexes (Holliday junction).. Its function is as follows. Endonuclease that resolves Holliday junction intermediates in genetic recombination. Cleaves mobile four-strand junctions by introducing symmetrical nicks in paired strands. Promotes annealing of linear ssDNA with homologous dsDNA. Required for DNA repair, homologous recombination and chromosome segregation. The protein is Holliday junction resolvase RecU of Streptococcus suis (strain 98HAH33).